Reading from the N-terminus, the 782-residue chain is Endonuclease MutS2 (782 aa).

Residue 336–343 coordinates ATP; the sequence is GPNTGGKT. The region spanning 707–782 is the Smr domain; it reads LDLRGYRYED…GFGVTVATLK (76 aa).

Belongs to the DNA mismatch repair MutS family. MutS2 subfamily. Homodimer. Binds to stalled ribosomes, contacting rRNA.

In terms of biological role, endonuclease that is involved in the suppression of homologous recombination and thus may have a key role in the control of bacterial genetic diversity. Acts as a ribosome collision sensor, splitting the ribosome into its 2 subunits. Detects stalled/collided 70S ribosomes which it binds and splits by an ATP-hydrolysis driven conformational change. Acts upstream of the ribosome quality control system (RQC), a ribosome-associated complex that mediates the extraction of incompletely synthesized nascent chains from stalled ribosomes and their subsequent degradation. Probably generates substrates for RQC. The polypeptide is Endonuclease MutS2 (Staphylococcus aureus (strain COL)).